The following is a 362-amino-acid chain: UDP-N-acetylglucosamine--N-acetylmuramyl-(pentapeptide) pyrophosphoryl-undecaprenol N-acetylglucosamine transferase (362 aa).

UDP-N-acetyl-alpha-D-glucosamine contacts are provided by residues 10-12 (TAG), Asn-124, Arg-161, Ser-195, and Gln-291.

Belongs to the glycosyltransferase 28 family. MurG subfamily.

It localises to the cell membrane. It carries out the reaction di-trans,octa-cis-undecaprenyl diphospho-N-acetyl-alpha-D-muramoyl-L-alanyl-D-glutamyl-meso-2,6-diaminopimeloyl-D-alanyl-D-alanine + UDP-N-acetyl-alpha-D-glucosamine = di-trans,octa-cis-undecaprenyl diphospho-[N-acetyl-alpha-D-glucosaminyl-(1-&gt;4)]-N-acetyl-alpha-D-muramoyl-L-alanyl-D-glutamyl-meso-2,6-diaminopimeloyl-D-alanyl-D-alanine + UDP + H(+). It participates in cell wall biogenesis; peptidoglycan biosynthesis. Functionally, cell wall formation. Catalyzes the transfer of a GlcNAc subunit on undecaprenyl-pyrophosphoryl-MurNAc-pentapeptide (lipid intermediate I) to form undecaprenyl-pyrophosphoryl-MurNAc-(pentapeptide)GlcNAc (lipid intermediate II). The protein is UDP-N-acetylglucosamine--N-acetylmuramyl-(pentapeptide) pyrophosphoryl-undecaprenol N-acetylglucosamine transferase of Streptomyces collinus.